The primary structure comprises 104 residues: ATP synthase subunit c (104 aa).

2 consecutive transmembrane segments (helical) span residues 31-51 (SMIAAGLGLGLAALGGAIGMG) and 75-95 (MFIALAMIEAQVIYALVIALI).

Belongs to the ATPase C chain family. In terms of assembly, F-type ATPases have 2 components, F(1) - the catalytic core - and F(0) - the membrane proton channel. F(1) has five subunits: alpha(3), beta(3), gamma(1), delta(1), epsilon(1). F(0) has three main subunits: a(1), b(2) and c(10-14). The alpha and beta chains form an alternating ring which encloses part of the gamma chain. F(1) is attached to F(0) by a central stalk formed by the gamma and epsilon chains, while a peripheral stalk is formed by the delta and b chains.

Its subcellular location is the cell inner membrane. In terms of biological role, f(1)F(0) ATP synthase produces ATP from ADP in the presence of a proton or sodium gradient. F-type ATPases consist of two structural domains, F(1) containing the extramembraneous catalytic core and F(0) containing the membrane proton channel, linked together by a central stalk and a peripheral stalk. During catalysis, ATP synthesis in the catalytic domain of F(1) is coupled via a rotary mechanism of the central stalk subunits to proton translocation. Functionally, key component of the F(0) channel; it plays a direct role in translocation across the membrane. A homomeric c-ring of between 10-14 subunits forms the central stalk rotor element with the F(1) delta and epsilon subunits. The sequence is that of ATP synthase subunit c from Sulfurimonas denitrificans (strain ATCC 33889 / DSM 1251) (Thiomicrospira denitrificans (strain ATCC 33889 / DSM 1251)).